The chain runs to 499 residues: Lysine--tRNA ligase (499 aa).

Mg(2+) is bound by residues Glu408 and Glu415.

Belongs to the class-II aminoacyl-tRNA synthetase family. As to quaternary structure, homodimer. The cofactor is Mg(2+).

It localises to the cytoplasm. It carries out the reaction tRNA(Lys) + L-lysine + ATP = L-lysyl-tRNA(Lys) + AMP + diphosphate. The polypeptide is Lysine--tRNA ligase (Bacillus cereus (strain ATCC 10987 / NRS 248)).